A 242-amino-acid polypeptide reads, in one-letter code: Putative ABC transporter ATP-binding protein TTE0246 (242 aa).

In terms of domain architecture, ABC transporter spans 5 to 242 (FELKNVSYFY…EKLLLKANLI (238 aa)). 38–45 (GANGSGKS) is a binding site for ATP.

It belongs to the ABC transporter superfamily.

It localises to the cell membrane. Probably part of an ABC transporter complex. Responsible for energy coupling to the transport system. This Caldanaerobacter subterraneus subsp. tengcongensis (strain DSM 15242 / JCM 11007 / NBRC 100824 / MB4) (Thermoanaerobacter tengcongensis) protein is Putative ABC transporter ATP-binding protein TTE0246.